We begin with the raw amino-acid sequence, 378 residues long: Succinyl-diaminopimelate desuccinylase (378 aa).

A Zn(2+)-binding site is contributed by His-66. Asp-68 is an active-site residue. Asp-99 serves as a coordination point for Zn(2+). Residue Glu-133 is the Proton acceptor of the active site. Residues Glu-134, Glu-162, and His-348 each contribute to the Zn(2+) site.

Belongs to the peptidase M20A family. DapE subfamily. As to quaternary structure, homodimer. Requires Zn(2+) as cofactor. It depends on Co(2+) as a cofactor.

It carries out the reaction N-succinyl-(2S,6S)-2,6-diaminopimelate + H2O = (2S,6S)-2,6-diaminopimelate + succinate. It functions in the pathway amino-acid biosynthesis; L-lysine biosynthesis via DAP pathway; LL-2,6-diaminopimelate from (S)-tetrahydrodipicolinate (succinylase route): step 3/3. Catalyzes the hydrolysis of N-succinyl-L,L-diaminopimelic acid (SDAP), forming succinate and LL-2,6-diaminopimelate (DAP), an intermediate involved in the bacterial biosynthesis of lysine and meso-diaminopimelic acid, an essential component of bacterial cell walls. In Halorhodospira halophila (strain DSM 244 / SL1) (Ectothiorhodospira halophila (strain DSM 244 / SL1)), this protein is Succinyl-diaminopimelate desuccinylase.